The primary structure comprises 496 residues: Maintenance of mitochondrial morphology protein 1 (496 aa).

The Lumenal portion of the chain corresponds to 1–22 (MSSQLNDPTPIPAQSSLSFTQG). A helical transmembrane segment spans residues 23–43 (FLLGQLSVVLLIAAFIKFFIF). At 44 to 496 (GEAPPPPSRG…SLPGGGVTTT (453 aa)) the chain is on the cytoplasmic side. 4 disordered regions span residues 50–96 (PSRG…VPSS), 276–331 (PLDT…KSNV), 395–433 (GRTG…SREP), and 449–496 (DLAS…VTTT). Basic residues predominate over residues 54–64 (LSHRSATHRRS). The segment covering 65-74 (NSIYSSTQHD) has biased composition (polar residues). Over residues 75 to 84 (GNTRTLREKP) the composition is skewed to basic and acidic residues. Over residues 85–96 (SNSNVLRPVPSS) the composition is skewed to polar residues. The SMP-LTD domain occupies 131-388 (QPESLDWFNV…EPRVQVVGLP (258 aa)). A compositionally biased stretch (pro residues) spans 276–287 (PLDTPSHSPSPP). Residues 407–418 (TGSNAPRSSTAA) are compositionally biased toward polar residues. Basic and acidic residues-rich tracts occupy residues 424–433 (AHHEDSSREP) and 462–474 (GDLR…REES).

Belongs to the MMM1 family. As to quaternary structure, homodimer. Component of the ER-mitochondria encounter structure (ERMES) or MDM complex, composed of mmm1, mdm10, mdm12 and mdm34. A mmm1 homodimer associates with one molecule of mdm12 on each side in a pairwise head-to-tail manner, and the SMP-LTD domains of mmm1 and mdm12 generate a continuous hydrophobic tunnel for phospholipid trafficking.

The protein localises to the endoplasmic reticulum membrane. Its function is as follows. Component of the ERMES/MDM complex, which serves as a molecular tether to connect the endoplasmic reticulum (ER) and mitochondria. Components of this complex are involved in the control of mitochondrial shape and protein biogenesis, and function in nonvesicular lipid trafficking between the ER and mitochondria. The mdm12-mmm1 subcomplex functions in the major beta-barrel assembly pathway that is responsible for biogenesis of all outer membrane beta-barrel proteins, and acts in a late step after the SAM complex. The mdm10-mdm12-mmm1 subcomplex further acts in the TOM40-specific pathway after the action of the mdm12-mmm1 complex. Essential for establishing and maintaining the structure of mitochondria and maintenance of mtDNA nucleoids. This Neosartorya fischeri (strain ATCC 1020 / DSM 3700 / CBS 544.65 / FGSC A1164 / JCM 1740 / NRRL 181 / WB 181) (Aspergillus fischerianus) protein is Maintenance of mitochondrial morphology protein 1.